The sequence spans 238 residues: Expansin-like protein 5 (238 aa).

The signal sequence occupies residues 1–21 (MRINFKLILIILTSFYGIINC). Residues 45–145 (NGNCGFGKLT…VKVPCRVSGN (101 aa)) enclose the Expansin-like EG45 domain. Disulfide bonds link Cys48-Cys78 and Cys81-Cys140. N-linked (GlcNAc...) asparagine glycosylation occurs at Asn89.

Belongs to the expansin family. Expansin A subfamily.

It is found in the secreted. May serve to lubricate the movement of the cellulose microfibrils during cell growth and wall extension and/or may serve to maintain the fluid state of the slug cell wall. This Dictyostelium discoideum (Social amoeba) protein is Expansin-like protein 5 (expl5).